Consider the following 622-residue polypeptide: Chaperone protein HtpG (622 aa).

The interval 1–334 is a; substrate-binding; it reads MKGQETRGFQ…SNDLPLNVSR (334 aa). Positions 335–550 are b; sequence EILQDSRITQ…ADEMSTQMAK (216 aa). The c stretch occupies residues 551–622; the sequence is LFAAAGQQAP…IRRMNQLLTA (72 aa).

Belongs to the heat shock protein 90 family. Homodimer.

It is found in the cytoplasm. In terms of biological role, molecular chaperone. Has ATPase activity. This is Chaperone protein HtpG from Yersinia pestis.